A 2183-amino-acid chain; its full sequence is MGAQVSTQKTGAHETSLSASGNSIIHYTNINYYKDAASNSANRQDFTQDPSKFTEPVKDVMIKSLPALNSPTVEECGYSDRVRSITLGNSTITTQECANVVVGYGVWPDYLSDEEATAEDQPTQPDVATCRFYTLNSVKWEMQSAGWWWKFPDALSEMGLFGQNMQYHYLGRSGYTIHVQCNASKFHQGCLLVVCVPEAEMGCTNAENAPAYGDLCGGETAKSFEQNAATGKTAVQTAVCNAGMGVGVGNLTIYPHQWINLRTNNSATIVMPYINSVPMDNMFRHNNFTLMIIPFAPLDYVTGASSYIPITVTVAPMSAEYNGLRLAGHQGLPTMLTPGSTQFLTSDDFQSPSAMPQFDVTPEMNIPGQVRNLMEIAEVDSVVPINNLKANLMTMEAYRVQVRSTDEMGGQIFGFPLQPGASSVLQRTLLGEILNYYTHWSGSLKLTFVFCGSAMATGKFLLAYSPPGAGAPDSRKNAMLGTHVIWDVGLQSSCVLCVPWISQTHYRYVVDDKYTASGFISCWYQTNVIVPAEAQKSCYIMCFVSACNDFSVRMLRDTQFIKQTNFYQGPTEESVERAMGRVADTIARGPSNSEQIPALTAVETGHTSQVDPSDTMQTRHVHNYHSRSESSIENFLCRSACVIYIKYSSAESNNLKRYAEWVINTRQVAQLRRKMEMFTYIRCDMELTFVITSHQEMSTATNSDVPVQTHQIMYVPPGGPVPTSVNDYVWQTSTNPSIFWTEGNAPPRMSIPFMSIGNAYTMFYDGWSNFSRDGIYGYNSLNNMGTIYARHVNDSSPGGLTSTIRIYFKPKHVKAYVPRPPRLCQYKKAKSVNFDVEAVTAERASLITTGPYGHQSGAVYVGNYKVVNRHLATHVDWQNCVWEDYNRDLLVSTTTAHGCDTIARCQCTTGVYFCASKSKHYPVSFEGPGLVEVQESEYYPKRYQSHVLLATGFSEPGDCGGILRCEHGVIGLVTMGGEGVVGFADVRDLLWLEDDAMEQGVKDYVEQLGNAFGSGFTNQICEQVNLLKESLVGQDSILEKSLKALVKIISALVIVVRNHDDLITVTATLALIGCTSSPWRWLKHKVSQYYGIPMAERQNNGWLKKFTEMTNACKGMEWIAVKIQKFIEWLKVKILPEVKEKHEFLSRLKQLPLLESQIATIEQSAPSQSDQEQLFSNVQYFAHYCRKYAPLYAAEAKRVFSLEKKMSNYIQFKSKCRIEPVCLLLHGSPGAGKSVATNLIGRSLAEKLNSSVYSLPPDPDHFDGYKQQAVVIMDDLCQNPDGKDVSLFCQMVSSVDFVPPMAALEEKGILFTSPFVLASTNAGSINAPTVSDSRALARRFHFDMNIEVISMYSQNGKINMPMSVKTCDEECCPVNFKRCCPLVCGKAIQFIDRKTQVRYSLDMLVTEMFREYNHRHSVGATLEALFQGPPVYREIKISVTPETPPPPVIADLLKSVDRQAIREYCKEKGWLVPEIDSILQIEKHVSRAFICLQALTTFVSVAGIIYIIYKLFAGFQGAYTGMPNQKPKVPTLRQAKVQGPAFEFAVAMMKRNSSTVKTEYGEFTMLGIYDRWAVLPRHAKPGPTILMNDQEVGVLDAKELIDRDGTNLELTLLKLNRNEKFRDIRGFLAKEEVEVNEAVLAINTSKFPNMYIPVGRVTDYGFLNLGGTPTKRMLMYNFPTRAGQCGGVLMSTGKVLGIHVGGNGHQGFSAGLLKHYFNDEQGEIEFIESSKDAGFPVINTPSRTKLEPSVFHHVFEGNKEPAVLRNGDPRLKVNFEEAIFFKYIGNVNTHVDEYMLEAVDHYAGQLATLDINTEPMKLEDAVYGTEGLEALDLTTSAGYPYVALGIKKRDILSKKTKDLTKLKECMDKYGLNLPMVTYVKDELRSAEKVAKGKSRLIEASSLNDSVAMRQTFGNLYKAFHLNPGIVTGSAVGCDPDVFWSKIPVMLDGHLIAFDYSGYDASLSPVWFACLKLLLEKLGYTHKETNYIDYLCNSHHLYRDKHYFVRGGMPSGCSGTSIFNSMINNIIIRTLMLKVYKGIDLDQFRMIAYGDDVIASYPWPIDASLLAEAGKDYGLIMTPADKGECFNEVTWTNVTFLKRYFRADEQYPFLVHPVMPMKDIHESIRWTKDPKNTQDHVRSLCLLAWHNGEHEYEEFIQKIRSVPVGRCLTLPAFSTLRRKWLDSF.

The N-myristoyl glycine; by host moiety is linked to residue G2. Residues 2 to 1493 (GAQVSTQKTG…HVSRAFICLQ (1492 aa)) are Cytoplasmic-facing. Residues 566–582 (FYQGPTEESVERAMGRV) form an amphipathic alpha-helix region. Catalysis depends on for protease 2A activity residues H870 and D888. The Zn(2+) site is built by C905 and C907. C959 (for protease 2A activity) is an active-site residue. Residues C965 and H967 each contribute to the Zn(2+) site. The membrane-binding stretch occupies residues 1099-1171 (NNGWLKKFTE…EQSAPSQSDQ (73 aa)). The interval 1099–1237 (NNGWLKKFTE…SPGAGKSVAT (139 aa)) is oligomerization. Positions 1120–1124 (AVKIQ) are RNA-binding. The SF3 helicase domain maps to 1203–1359 (EKKMSNYIQF…SMYSQNGKIN (157 aa)). The Zn(2+) site is built by C1367, C1379, and C1384. Residues 1367 to 1384 (CDEECCPVNFKRCCPLVC) form a C4-type; degenerate zinc finger. The interval 1411–1418 (EYNHRHSV) is RNA-binding. Residues 1422 to 1427 (LEALFQ) are oligomerization. An intramembrane segment occupies 1494–1509 (ALTTFVSVAGIIYIIY). At 1510–2183 (KLFAGFQGAY…TLRRKWLDSF (674 aa)) the chain is on the cytoplasmic side. Y1519 is modified (O-(5'-phospho-RNA)-tyrosine). In terms of domain architecture, Peptidase C3 spans 1539–1717 (GPAFEFAVAM…FSAGLLKHYF (179 aa)). Residues H1578, E1609, and C1685 each act as for protease 3C activity in the active site. The RdRp catalytic domain maps to 1948–2064 (GHLIAFDYSG…SYPWPIDASL (117 aa)). 2 residues coordinate Mg(2+): D1954 and D2050.

It belongs to the picornaviruses polyprotein family. Interacts with capsid protein VP1 and capsid protein VP3 to form heterotrimeric protomers. As to quaternary structure, interacts with capsid protein VP0, and capsid protein VP3 to form heterotrimeric protomers. Five protomers subsequently associate to form pentamers which serve as building blocks for the capsid. Interacts with capsid protein VP2, capsid protein VP3 and capsid protein VP4 following cleavage of capsid protein VP0. Interacts with host CXADR. In terms of assembly, interacts with capsid protein VP1 and capsid protein VP3 in the mature capsid. Interacts with capsid protein VP0 and capsid protein VP1 to form heterotrimeric protomers. Five protomers subsequently associate to form pentamers which serve as building blocks for the capsid. Interacts with capsid protein VP4 in the mature capsid. Interacts with protein 2C; this interaction may be important for virion morphogenesis. As to quaternary structure, interacts with capsid protein VP1 and capsid protein VP3. In terms of assembly, homodimer. Homohexamer; forms a hexameric ring structure with 6-fold symmetry characteristic of AAA+ ATPases. Interacts (via N-terminus) with host RTN3 (via reticulon domain); this interaction is important for viral replication. Interacts with capsid protein VP3; this interaction may be important for virion morphogenesis. As to quaternary structure, interacts with protein 3CD. In terms of assembly, homodimer. Interacts with host GBF1. Interacts (via GOLD domain) with host ACBD3 (via GOLD domain); this interaction allows the formation of a viral protein 3A/ACBD3 heterotetramer with a 2:2 stoichiometry, which will stimulate the recruitment of host PI4KB in order to synthesize PI4P at the viral RNA replication sites. Interacts with RNA-directed RNA polymerase. As to quaternary structure, interacts with protein 3AB and with RNA-directed RNA polymerase. In terms of assembly, interacts with Viral protein genome-linked and with protein 3CD. Mg(2+) serves as cofactor. Post-translationally, specific enzymatic cleavages in vivo by the viral proteases yield processing intermediates and the mature proteins. Myristoylation is required for the formation of pentamers during virus assembly. Further assembly of 12 pentamers and a molecule of genomic RNA generates the provirion. In terms of processing, during virion maturation, immature virions are rendered infectious following cleavage of VP0 into VP4 and VP2. This maturation seems to be an autocatalytic event triggered by the presence of RNA in the capsid and it is followed by a conformational change infectious virion. Post-translationally, myristoylation is required during RNA encapsidation and formation of the mature virus particle. VPg is uridylylated by the polymerase into VPg-pUpU. This acts as a nucleotide-peptide primer for the genomic RNA replication.

It localises to the virion. It is found in the host cytoplasm. The protein resides in the host cytoplasmic vesicle membrane. Its subcellular location is the host nucleus. It catalyses the reaction a ribonucleoside 5'-triphosphate + H2O = a ribonucleoside 5'-diphosphate + phosphate + H(+). It carries out the reaction Selective cleavage of Tyr-|-Gly bond in the picornavirus polyprotein.. The enzyme catalyses RNA(n) + a ribonucleoside 5'-triphosphate = RNA(n+1) + diphosphate. The catalysed reaction is Selective cleavage of Gln-|-Gly bond in the poliovirus polyprotein. In other picornavirus reactions Glu may be substituted for Gln, and Ser or Thr for Gly.. Replication or transcription is subject to high level of random mutations by the nucleotide analog ribavirin. Forms an icosahedral capsid of pseudo T=3 symmetry with capsid proteins VP2 and VP3. The capsid is 300 Angstroms in diameter, composed of 60 copies of each capsid protein and enclosing the viral positive strand RNA genome. Capsid protein VP1 mainly forms the vertices of the capsid. Capsid protein VP1 interacts with host CXADR to provide virion attachment to target host cells. This attachment induces virion internalization. Tyrosine kinases are probably involved in the entry process. After binding to its receptor, the capsid undergoes conformational changes. Capsid protein VP1 N-terminus (that contains an amphipathic alpha-helix) and capsid protein VP4 are externalized. Together, they shape a pore in the host membrane through which viral genome is translocated to host cell cytoplasm. Functionally, forms an icosahedral capsid of pseudo T=3 symmetry with capsid proteins VP2 and VP3. The capsid is 300 Angstroms in diameter, composed of 60 copies of each capsid protein and enclosing the viral positive strand RNA genome. Its function is as follows. Lies on the inner surface of the capsid shell. After binding to the host receptor, the capsid undergoes conformational changes. Capsid protein VP4 is released, Capsid protein VP1 N-terminus is externalized, and together, they shape a pore in the host membrane through which the viral genome is translocated into the host cell cytoplasm. In terms of biological role, component of immature procapsids, which is cleaved into capsid proteins VP4 and VP2 after maturation. Allows the capsid to remain inactive before the maturation step. Cysteine protease that cleaves viral polyprotein and specific host proteins. It is responsible for the autocatalytic cleavage between the P1 and P2 regions, which is the first cleavage occurring in the polyprotein. Also cleaves the host translation initiation factor EIF4G1, in order to shut down the capped cellular mRNA translation. Inhibits the host nucleus-cytoplasm protein and RNA trafficking by cleaving host members of the nuclear pores. Counteracts stress granule formation probably by antagonizing its assembly or promoting its dissassembly. Cleaves and inhibits host IFIH1/MDA5, thereby inhibiting the type-I IFN production and the establishment of the antiviral state. Cleaves and inhibits host MAVS, thereby inhibiting the type-I IFN production and the establishment of the antiviral state. Functionally, plays an essential role in the virus replication cycle by acting as a viroporin. Creates a pore in the host endoplasmic reticulum and as a consequence releases Ca2+ in the cytoplasm of infected cell. In turn, high levels of cytoplasmic calcium may trigger membrane trafficking and transport of viral ER-associated proteins to viroplasms, sites of viral genome replication. Its function is as follows. Induces and associates with structural rearrangements of intracellular membranes. Displays RNA-binding, nucleotide binding and NTPase activities. May play a role in virion morphogenesis and viral RNA encapsidation by interacting with the capsid protein VP3. In terms of biological role, localizes the viral replication complex to the surface of membranous vesicles. Together with protein 3CD binds the Cis-Active RNA Element (CRE) which is involved in RNA synthesis initiation. Acts as a cofactor to stimulate the activity of 3D polymerase, maybe through a nucleid acid chaperone activity. Localizes the viral replication complex to the surface of membranous vesicles. It inhibits host cell endoplasmic reticulum-to-Golgi apparatus transport and causes the disassembly of the Golgi complex, possibly through GBF1 interaction. This would result in depletion of MHC, trail receptors and IFN receptors at the host cell surface. Plays an essential role in viral RNA replication by recruiting ACBD3 and PI4KB at the viral replication sites, thereby allowing the formation of the rearranged membranous structures where viral replication takes place. Functionally, acts as a primer for viral RNA replication and remains covalently bound to viral genomic RNA. VPg is uridylylated prior to priming replication into VPg-pUpU. The oriI viral genomic sequence may act as a template for this. The VPg-pUpU is then used as primer on the genomic RNA poly(A) by the RNA-dependent RNA polymerase to replicate the viral genome. During genome replication, the VPg-RNA linkage is removed by the host TDP2, thereby accelerating replication. During the late stage of the replication cycle, host TDP2 is excluded from sites of viral RNA synthesis and encapsidation, allowing for the generation of progeny virions. Its function is as follows. Involved in the viral replication complex and viral polypeptide maturation. It exhibits protease activity with a specificity and catalytic efficiency that is different from protease 3C. Protein 3CD lacks polymerase activity. Protein 3CD binds to the 5'UTR of the viral genome. In terms of biological role, replicates the viral genomic RNA on the surface of intracellular membranes. May form linear arrays of subunits that propagate along a strong head-to-tail interaction called interface-I. Covalently attaches UMP to a tyrosine of VPg, which is used to prime RNA synthesis. The positive stranded RNA genome is first replicated at virus induced membranous vesicles, creating a dsRNA genomic replication form. This dsRNA is then used as template to synthesize positive stranded RNA genomes. ss(+)RNA genomes are either translated, replicated or encapsidated. Major viral protease that mediates proteolytic processing of the polyprotein. Cleaves host EIF5B, contributing to host translation shutoff. Also cleaves host PABPC1, contributing to host translation shutoff. Cleaves host NLRP1, triggers host N-glycine-mediated degradation of the autoinhibitory NLRP1 N-terminal fragment. This is Genome polyprotein from Coxsackievirus B4 (strain JVB / Benschoten / New York/51).